The sequence spans 85 residues: Large ribosomal subunit protein bL27 (85 aa).

The disordered stretch occupies residues 1–21; that stretch reads MAHKKAGGSTRNGRDSEGKRL.

This sequence belongs to the bacterial ribosomal protein bL27 family.

The sequence is that of Large ribosomal subunit protein bL27 from Hamiltonella defensa subsp. Acyrthosiphon pisum (strain 5AT).